Consider the following 734-residue polypeptide: Photosystem I P700 chlorophyll a apoprotein A2 (734 aa).

The next 8 membrane-spanning stretches (helical) occupy residues 46-69 (IFAS…FHVA), 135-158 (LYTG…LHLQ), 175-199 (LNHH…HVAI), 273-291 (MAHH…GHMY), 330-353 (LHFQ…QHMY), 369-395 (AALY…IFFI), 417-439 (AIIS…LYVH), and 517-535 (FLVH…LILV). The [4Fe-4S] cluster site is built by Cys-559 and Cys-568. 2 consecutive transmembrane segments (helical) span residues 575 to 596 (AFYL…YWHW) and 643 to 665 (LSVW…MFLI). Residues His-654, Met-662, and Tyr-670 each coordinate chlorophyll a. Trp-671 is a binding site for phylloquinone. Residues 707-727 (LVGLAHFSVGYIFTYAAFLIA) traverse the membrane as a helical segment.

It belongs to the PsaA/PsaB family. In terms of assembly, the PsaA/B heterodimer binds the P700 chlorophyll special pair and subsequent electron acceptors. PSI consists of a core antenna complex that captures photons, and an electron transfer chain that converts photonic excitation into a charge separation. The eukaryotic PSI reaction center is composed of at least 11 subunits. The cofactor is P700 is a chlorophyll a/chlorophyll a' dimer, A0 is one or more chlorophyll a, A1 is one or both phylloquinones and FX is a shared 4Fe-4S iron-sulfur center..

It localises to the plastid. The protein resides in the chloroplast thylakoid membrane. It catalyses the reaction reduced [plastocyanin] + hnu + oxidized [2Fe-2S]-[ferredoxin] = oxidized [plastocyanin] + reduced [2Fe-2S]-[ferredoxin]. Functionally, psaA and PsaB bind P700, the primary electron donor of photosystem I (PSI), as well as the electron acceptors A0, A1 and FX. PSI is a plastocyanin-ferredoxin oxidoreductase, converting photonic excitation into a charge separation, which transfers an electron from the donor P700 chlorophyll pair to the spectroscopically characterized acceptors A0, A1, FX, FA and FB in turn. Oxidized P700 is reduced on the lumenal side of the thylakoid membrane by plastocyanin. This is Photosystem I P700 chlorophyll a apoprotein A2 from Solanum tuberosum (Potato).